Here is a 223-residue protein sequence, read N- to C-terminus: Deoxyribose-phosphate aldolase (223 aa).

The Proton donor/acceptor role is filled by Asp-89. The Schiff-base intermediate with acetaldehyde role is filled by Lys-152. Residue Lys-181 is the Proton donor/acceptor of the active site.

Belongs to the DeoC/FbaB aldolase family. DeoC type 1 subfamily.

It localises to the cytoplasm. The catalysed reaction is 2-deoxy-D-ribose 5-phosphate = D-glyceraldehyde 3-phosphate + acetaldehyde. It participates in carbohydrate degradation; 2-deoxy-D-ribose 1-phosphate degradation; D-glyceraldehyde 3-phosphate and acetaldehyde from 2-deoxy-alpha-D-ribose 1-phosphate: step 2/2. In terms of biological role, catalyzes a reversible aldol reaction between acetaldehyde and D-glyceraldehyde 3-phosphate to generate 2-deoxy-D-ribose 5-phosphate. The protein is Deoxyribose-phosphate aldolase of Listeria monocytogenes serotype 4b (strain CLIP80459).